A 580-amino-acid chain; its full sequence is Formate--tetrahydrofolate ligase (580 aa).

83–90 (TPMGEGKT) contacts ATP.

Belongs to the formate--tetrahydrofolate ligase family.

The catalysed reaction is (6S)-5,6,7,8-tetrahydrofolate + formate + ATP = (6R)-10-formyltetrahydrofolate + ADP + phosphate. It participates in one-carbon metabolism; tetrahydrofolate interconversion. This Haloquadratum walsbyi (strain DSM 16790 / HBSQ001) protein is Formate--tetrahydrofolate ligase.